The sequence spans 293 residues: Homoserine kinase (293 aa).

ATP is bound at residue 83 to 93 (PITRGMGSSSA).

This sequence belongs to the GHMP kinase family. Homoserine kinase subfamily.

It is found in the cytoplasm. The enzyme catalyses L-homoserine + ATP = O-phospho-L-homoserine + ADP + H(+). Its pathway is amino-acid biosynthesis; L-threonine biosynthesis; L-threonine from L-aspartate: step 4/5. Its function is as follows. Catalyzes the ATP-dependent phosphorylation of L-homoserine to L-homoserine phosphate. The sequence is that of Homoserine kinase from Helicobacter pylori (strain J99 / ATCC 700824) (Campylobacter pylori J99).